The sequence spans 399 residues: Lysosomal acid lipase/cholesteryl ester hydrolase (399 aa).

A signal peptide spans 1–27 (MKMRFLGLVVCLVLWTLHSEASGGKLT). The propeptide at 28 to 76 (AVNPETNMNVSEIISYWGFPSEEYLVETEDGYILCLNRIPHGRKNHSDK) is removed in mature form. Asparagine 36, asparagine 72, asparagine 101, and asparagine 161 each carry an N-linked (GlcNAc...) asparagine glycan. Positions 80–380 (PVVFLQHGLL…EWEHLDFIWG (301 aa)) constitute an AB hydrolase-1 domain. Serine 174 serves as the catalytic Charge relay system. N-linked (GlcNAc...) asparagine glycans are attached at residues asparagine 273 and asparagine 321. Histidine 374 functions as the Charge relay system in the catalytic mechanism.

Belongs to the AB hydrolase superfamily. Lipase family. In terms of assembly, monomer. In terms of processing, glycosylation is not essential for catalytic activity.

The protein localises to the lysosome. It catalyses the reaction a sterol ester + H2O = a sterol + a fatty acid + H(+). It carries out the reaction cholesteryl (9Z-octadecenoate) + H2O = cholesterol + (9Z)-octadecenoate + H(+). The enzyme catalyses a triacylglycerol + H2O = a 1,2-diacylglycerol + a fatty acid + H(+). The catalysed reaction is 1,2-di-(9Z-octadecenoyl)-glycerol + (9Z)-octadecenoate + H(+) = 1,2,3-tri-(9Z-octadecenoyl)-glycerol + H2O. It catalyses the reaction a 1,2-diacylglycerol + H2O = a 1-acylglycerol + a fatty acid + H(+). It carries out the reaction 1,2-di-(9Z-octadecenoyl)-glycerol + H2O = 1-(9Z-octadecenoyl)-glycerol + (9Z)-octadecenoate + H(+). The enzyme catalyses a 1,3-diacylglycerol + H2O = a 1-acylglycerol + a fatty acid + H(+). The catalysed reaction is 1,3-di-(9Z-octadecenoyl)-glycerol + H2O = 1-(9Z-octadecenoyl)-glycerol + (9Z)-octadecenoate + H(+). Its function is as follows. Catalyzes the deacylation of cholesteryl ester core lipids of endocytosed low density lipoproteins to generate free fatty acids and cholesterol. Hydrolyzes triglycerides (1,2,3-triacylglycerol) and diglycerides (such as 1,2-diacylglycerol and 1,3-diacylglycerol) with preference for the acyl moieties at the sn-1 or sn-3 positions. This Macaca fascicularis (Crab-eating macaque) protein is Lysosomal acid lipase/cholesteryl ester hydrolase (LIPA).